Here is an 886-residue protein sequence, read N- to C-terminus: DNA mismatch repair protein MutS (886 aa).

641-648 (GPNMAGKS) is a binding site for ATP.

This sequence belongs to the DNA mismatch repair MutS family.

Its function is as follows. This protein is involved in the repair of mismatches in DNA. It is possible that it carries out the mismatch recognition step. This protein has a weak ATPase activity. This chain is DNA mismatch repair protein MutS, found in Rickettsia felis (strain ATCC VR-1525 / URRWXCal2) (Rickettsia azadi).